A 200-amino-acid chain; its full sequence is Guanylate kinase (200 aa).

A Guanylate kinase-like domain is found at 4–183 (GAVLIISGPS…AKEAMVAIAR (180 aa)). Position 11 to 18 (11 to 18 (GPSGCGKS)) interacts with ATP.

It belongs to the guanylate kinase family.

It localises to the cytoplasm. It carries out the reaction GMP + ATP = GDP + ADP. In terms of biological role, essential for recycling GMP and indirectly, cGMP. The chain is Guanylate kinase from Helicobacter hepaticus (strain ATCC 51449 / 3B1).